A 485-amino-acid polypeptide reads, in one-letter code: Keratin, type I cytoskeletal 14 (485 aa).

Residues 1–15 are compositionally biased toward polar residues; the sequence is MATCSRQFTSSSSMK. A disordered region spans residues 1–21; that stretch reads MATCSRQFTSSSSMKGSCGIG. A head region spans residues 1 to 121; sequence MATCSRQFTS…GLGDGLLVGS (121 aa). A coil 1A region spans residues 122-157; it reads EKVTMQNLNDRLATYLDKVRALEEANSDLEVKIRDW. The 312-residue stretch at 122-433 folds into the IF rod domain; it reads EKVTMQNLND…RLLEGEDAHL (312 aa). The segment at 158–175 is linker 1; sequence YQRQRPTEIKDYSPYFKT. A coil 1B region spans residues 176–267; that stretch reads IEDLKSKILA…KNHEEEMASM (92 aa). The interval 268–290 is linker 12; it reads RGQVGGDVNVEMDAAPGVDLSRI. The tract at residues 291–429 is coil 2; that stretch reads LNEMRDQYEK…ATYRRLLEGE (139 aa). The tract at residues 430–485 is tail; that stretch reads DAHLSSAQFSSSSQFSSGSQSSRDVTSTNRQIRTKVMDVHDGKVVSTHEQVLRTKN. Residues 432-485 are interaction with Type I keratins and keratin filaments; the sequence is HLSSAQFSSSSQFSSGSQSSRDVTSTNRQIRTKVMDVHDGKVVSTHEQVLRTKN. Residues 437-451 show a composition bias toward low complexity; sequence QFSSSSQFSSGSQSS. The disordered stretch occupies residues 437–458; that stretch reads QFSSSSQFSSGSQSSRDVTSTN. Ser-448 is subject to Phosphoserine.

Belongs to the intermediate filament family. As to quaternary structure, heterotetramer of two type I and two type II keratins. Forms a disulfide-linked heterodimer (via 2B domains) with KRT5 (via 2B domains). Forms a heterodimer with KRT1; the interaction is more abundant in the absence of KRT5. Interacts with TRADD and with keratin filaments. Associates with other type I keratins. Interacts with EPPK1. Interacts with KLHL24. Interacts with PKP1 (via N-terminus) and PKP2. A disulfide bond is formed between rather than within filaments and promotes the formation of a keratin filament cage around the nucleus. In terms of processing, ubiquitinated by the BCR(KLHL24) E3 ubiquitin ligase complex. As to expression, expressed in most cells of squamous cell carcinomas, in spinous and suprabasal cells around the branching papillary region of papillomas, and weakly in a few proliferative cells of hyperplastic tissue.

The protein resides in the cytoplasm. It localises to the nucleus. Functionally, the nonhelical tail domain is involved in promoting KRT5-KRT14 filaments to self-organize into large bundles and enhances the mechanical properties involved in resilience of keratin intermediate filaments in vitro. The sequence is that of Keratin, type I cytoskeletal 14 (Krt14) from Rattus norvegicus (Rat).